Reading from the N-terminus, the 407-residue chain is RNA-binding motif, single-stranded-interacting protein 2 (407 aa).

An N-acetylmethionine modification is found at methionine 1. The tract at residues phenylalanine 14–aspartate 51 is disordered. Low complexity predominate over residues serine 37–serine 47. RRM domains follow at residues threonine 56 to glutamine 129 and threonine 135 to glycine 220. Residue serine 106 is modified to Phosphoserine. 2 positions are modified to phosphoserine: serine 280 and serine 285. The segment covering proline 374–valine 392 has biased composition (low complexity). Residues proline 374–histidine 398 form a disordered region.

The protein resides in the nucleus. In Bos taurus (Bovine), this protein is RNA-binding motif, single-stranded-interacting protein 2 (RBMS2).